We begin with the raw amino-acid sequence, 566 residues long: Urease subunit beta (566 aa).

One can recognise a Urease domain in the interval glycine 129–phenylalanine 566. Ni(2+) is bound by residues histidine 134, histidine 136, and lysine 217. Residue lysine 217 is modified to N6-carboxylysine. Residue histidine 219 participates in substrate binding. Histidine 246 and histidine 272 together coordinate Ni(2+). Histidine 320 acts as the Proton donor in catalysis. Ni(2+) is bound at residue aspartate 360.

This sequence belongs to the metallo-dependent hydrolases superfamily. Urease alpha subunit family. As to quaternary structure, heterohexamer of 3 UreA (alpha) and 3 UreB (beta) subunits. It depends on Ni cation as a cofactor. In terms of processing, carboxylation allows a single lysine to coordinate two nickel ions.

The protein localises to the cytoplasm. It carries out the reaction urea + 2 H2O + H(+) = hydrogencarbonate + 2 NH4(+). The protein operates within nitrogen metabolism; urea degradation; CO(2) and NH(3) from urea (urease route): step 1/1. The sequence is that of Urease subunit beta from Aliarcobacter butzleri (strain RM4018) (Arcobacter butzleri).